A 506-amino-acid polypeptide reads, in one-letter code: DEAD-box ATP-dependent RNA helicase CshA (506 aa).

A Q motif motif is present at residues 2-30; the sequence is QNFKELGISDNTVQSLESMGFKEPTPIQK. The 171-residue stretch at 33 to 203 folds into the Helicase ATP-binding domain; that stretch reads IPYALQGIDI…QQFMKSPKII (171 aa). 46–53 is an ATP binding site; that stretch reads AQTGTGKT. The DEAD box signature appears at 150 to 153; it reads DEAD. The region spanning 214–375 is the Helicase C-terminal domain; that stretch reads QIEEFYTIVK…LRPPHRKEVL (162 aa). A disordered region spans residues 436–506; it reads EKPLSRKGRN…KGRTFADHQK (71 aa). Residues 468–480 show a composition bias toward basic residues; sequence KRSKGYSSKKKST.

It belongs to the DEAD box helicase family. CshA subfamily. In terms of assembly, oligomerizes, may be a member of the RNA degradosome.

The protein resides in the cytoplasm. The enzyme catalyses ATP + H2O = ADP + phosphate + H(+). Functionally, DEAD-box RNA helicase possibly involved in RNA degradation. Unwinds dsRNA in both 5'- and 3'-directions, has RNA-dependent ATPase activity. This is DEAD-box ATP-dependent RNA helicase CshA from Staphylococcus aureus (strain MRSA252).